Consider the following 509-residue polypeptide: Maturase K (509 aa).

The protein belongs to the intron maturase 2 family. MatK subfamily.

The protein localises to the plastid. The protein resides in the chloroplast. Usually encoded in the trnK tRNA gene intron. Probably assists in splicing its own and other chloroplast group II introns. In Ibicella lutea (Yellow unicorn-plant), this protein is Maturase K.